A 672-amino-acid chain; its full sequence is Spermatid perinuclear RNA-binding protein (672 aa).

Positions 5-363 constitute a DZF domain; that stretch reads RSFANDDRHV…ALKRPFEDGL (359 aa). Disordered stretches follow at residues 52 to 73 and 349 to 371; these read TNKGTKTEGETEVKKDEAGENY and GAGSSALKRPFEDGLGDDKDPNK. Residues 357-371 show a composition bias toward basic and acidic residues; it reads RPFEDGLGDDKDPNK. In terms of domain architecture, DRBM 1 spans 387–453; sequence DLMNALMRLN…AVKVLQAMGY (67 aa). Residues 466–476 are compositionally biased toward basic and acidic residues; it reads SDEKSDNESKN. The disordered stretch occupies residues 466-499; that stretch reads SDEKSDNESKNETVSSNSSNNTGNSTTETSSTLE. A compositionally biased stretch (low complexity) spans 477–497; that stretch reads ETVSSNSSNNTGNSTTETSST. Positions 510 to 576 constitute a DRBM 2 domain; the sequence is SGKNPVMELN…ALAALEKLFS (67 aa). Asymmetric dimethylarginine occurs at positions 612 and 617.

Interacts with EIF2AK2. Associates with microtubules; it is unsure whether such interaction is direct or indirect.

The protein localises to the cytoplasm. In terms of biological role, involved in spermatogenesis and sperm function. Plays a role in regulation of cell growth. Binds to double-stranded DNA and RNA. Binds most efficiently to poly(I:C) RNA than to poly(dI:dC) DNA. Binds also to single-stranded poly(G) RNA. Binds non-specifically to the mRNA PRM1 3'-UTR and adenovirus VA RNA. This is Spermatid perinuclear RNA-binding protein (STRBP) from Homo sapiens (Human).